Here is a 202-residue protein sequence, read N- to C-terminus: MIGRLRGSLAEKQPPHLVLDVNGVGYEVEVPMTTLYRLPHVGETVTLHTHLVVREDAHLLYGFYEKRERELFRELIRLNGVGPKLALALMSGLEVDELVRCVQAQDTSALTRIPGVGKKTAERLLVELKDRFKAWEALPGTFTLVSNGPNQAEPVASAESDAVSALISLGYKPQEASKAVSAIKEKDLSSADLIRRALKGMG.

The tract at residues 1 to 64 is domain I; that stretch reads MIGRLRGSLA…EDAHLLYGFY (64 aa). The domain II stretch occupies residues 65-143; the sequence is EKRERELFRE…AWEALPGTFT (79 aa). The interval 144–153 is flexible linker; the sequence is LVSNGPNQAE. The tract at residues 154–202 is domain III; the sequence is PVASAESDAVSALISLGYKPQEASKAVSAIKEKDLSSADLIRRALKGMG.

The protein belongs to the RuvA family. Homotetramer. Forms an RuvA(8)-RuvB(12)-Holliday junction (HJ) complex. HJ DNA is sandwiched between 2 RuvA tetramers; dsDNA enters through RuvA and exits via RuvB. An RuvB hexamer assembles on each DNA strand where it exits the tetramer. Each RuvB hexamer is contacted by two RuvA subunits (via domain III) on 2 adjacent RuvB subunits; this complex drives branch migration. In the full resolvosome a probable DNA-RuvA(4)-RuvB(12)-RuvC(2) complex forms which resolves the HJ.

Its subcellular location is the cytoplasm. Its function is as follows. The RuvA-RuvB-RuvC complex processes Holliday junction (HJ) DNA during genetic recombination and DNA repair, while the RuvA-RuvB complex plays an important role in the rescue of blocked DNA replication forks via replication fork reversal (RFR). RuvA specifically binds to HJ cruciform DNA, conferring on it an open structure. The RuvB hexamer acts as an ATP-dependent pump, pulling dsDNA into and through the RuvAB complex. HJ branch migration allows RuvC to scan DNA until it finds its consensus sequence, where it cleaves and resolves the cruciform DNA. The polypeptide is Holliday junction branch migration complex subunit RuvA (Pseudomonas syringae pv. syringae (strain B728a)).